The sequence spans 130 residues: Small ribosomal subunit protein uS9 (130 aa).

This sequence belongs to the universal ribosomal protein uS9 family.

This chain is Small ribosomal subunit protein uS9, found in Pseudoalteromonas atlantica (strain T6c / ATCC BAA-1087).